The following is a 956-amino-acid chain: MAEKPEVLDAVLKETVDLENIPIEEVFENLRCTREGLTATAAQERLSIFGYNKLEEKKESKFLKFLGFMWNPLSWVMEAAAIMAIALANGGGKPPDWQDFVGIITLLIINSTISFIEENNAGNAAAALMARLAPKAKVLRDGKWDEEDASVLVPGDIISIKLGDIIPADARLLEGDPLKIDQSALTGESLPVTKGPGDGVYSGSTCKQGEIEAVVIATGVHTFFGKAAHLVDSTNQVGHFQKVLTAIGNFCICSIAVGMIIEIIVMYPIQHRKYRPGIDNLLVLLIGGIPIAMPTVLSVTMAIGSHRLAQQGAITKRMTAIEEMAGMDVLCSDKTGTLTLNKLTVDKALIEVFAKGIDADTVVLMAARASRIENQDAIDTAIVGMLADPKEARAGIREIHFLPFNPTDKRTALTYLDGEGKMHRVSKGAPEQILNLAHNKSDIERRVHTVIDKFAERGLRSLGVAYQEVPEGRKESAGGPWQFIALLPLFDPPRHDSAETIRRALNLGVNVKMITGDQLAIGKETGRRLGMGTNMYPSSALLGQTKDESIAALPIDELIEKADGFAGVFPEHKYEIVKRLQARKHICGMTGDGVNDAPALKKADIGIAVDDATDAARSASDIVLTEPGLSVIISAVLTSRAIFQRMKNYTIYAVSITIRIVLGFMLLALIWKFDFPPFMVLIIAILNDGTIMTISKDRVKPSPLPDSWKLAEIFTTGVVLGGYLAMMTVIFFWAAYKTNFFPRIFGVSTLEKTATDDFRKLASAIYLQVSTISQALIFVTRSRSWSFVERPGLLLVFAFFVAQLVATLIAVYANWSFAAIEGIGWGWAGVIWLYNIVTYIPLDLIKFLIRYALSGKAWDLVLEQRIAFTRKKDFGKELRELQWAHAQRTLHGLQVPDPKIFSETTNFNELNQLAEEAKRRAEIARLRELHTLKGHVESVVKLKGLDIETIQQSYTV.

Residues 1–65 (MAEKPEVLDA…EKKESKFLKF (65 aa)) are Cytoplasmic-facing. A helical membrane pass occupies residues 66–85 (LGFMWNPLSWVMEAAAIMAI). Over 86–97 (ALANGGGKPPDW) the chain is Extracellular. Residues 98-118 (QDFVGIITLLIINSTISFIEE) form a helical membrane-spanning segment. Over 119–247 (NNAGNAAAAL…GHFQKVLTAI (129 aa)) the chain is Cytoplasmic. The chain crosses the membrane as a helical span at residues 248–268 (GNFCICSIAVGMIIEIIVMYP). Over 269–277 (IQHRKYRPG) the chain is Extracellular. A helical transmembrane segment spans residues 278–295 (IDNLLVLLIGGIPIAMPT). The Cytoplasmic segment spans residues 296–646 (VLSVTMAIGS…LTSRAIFQRM (351 aa)). D333 acts as the 4-aspartylphosphate intermediate in catalysis. D592 and D596 together coordinate Mg(2+). A helical transmembrane segment spans residues 647–666 (KNYTIYAVSITIRIVLGFML). The Extracellular portion of the chain corresponds to 667 to 674 (LALIWKFD). A helical transmembrane segment spans residues 675–697 (FPPFMVLIIAILNDGTIMTISKD). At 698 to 713 (RVKPSPLPDSWKLAEI) the chain is on the cytoplasmic side. The helical transmembrane segment at 714-734 (FTTGVVLGGYLAMMTVIFFWA) threads the bilayer. Over 735–759 (AYKTNFFPRIFGVSTLEKTATDDFR) the chain is Extracellular. A helical membrane pass occupies residues 760-780 (KLASAIYLQVSTISQALIFVT). The Cytoplasmic portion of the chain corresponds to 781 to 792 (RSRSWSFVERPG). A helical transmembrane segment spans residues 793 to 813 (LLLVFAFFVAQLVATLIAVYA). At 814–821 (NWSFAAIE) the chain is on the extracellular side. A helical transmembrane segment spans residues 822–842 (GIGWGWAGVIWLYNIVTYIPL). The Cytoplasmic segment spans residues 843–956 (DLIKFLIRYA…IETIQQSYTV (114 aa)).

It belongs to the cation transport ATPase (P-type) (TC 3.A.3) family. Type IIIA subfamily. In terms of assembly, possibly exists as a homodimer or a homotrimer.

The protein localises to the cell membrane. The enzyme catalyses ATP + H2O + H(+)(in) = ADP + phosphate + 2 H(+)(out). Its function is as follows. The plasma membrane ATPase of plants and fungi is a hydrogen ion pump. The proton gradient it generates drives the active transport of nutrients by H(+)-symport. The resulting external acidification and/or internal alkinization may mediate growth responses. This Solanum lycopersicum (Tomato) protein is Plasma membrane ATPase 1 (LHA1).